The primary structure comprises 1027 residues: Abnormal embryogenesis protein 30 (1027 aa).

WD repeat units lie at residues 18 to 65 (RTPF…IQAV) and 70 to 109 (KLDS…VRFS). Disordered stretches follow at residues 619-655 (NDSS…ACDL) and 1005-1027 (AMDS…DDDI). Composition is skewed to acidic residues over residues 625 to 647 (LEED…EPEG) and 1014 to 1027 (DNGE…DDDI).

Belongs to the APC4 family. In terms of assembly, the APC/C is probably composed of at least 12 subunits: apc-2, apc-10, apc-11, cdc-26, emb-1, emb-27, emb-30, mat-1, mat-2, mat-3, such-1 and gfi-3.

Its pathway is protein modification; protein ubiquitination. Probable component of the anaphase promoting complex/cyclosome (APC/C), a cell cycle-regulated E3 ubiquitin ligase that controls progression through mitosis and the G1 phase of the cell cycle. The APC/C complex acts by mediating ubiquitination and subsequent degradation of target proteins. Developmental role in early embryogenesis and the metaphase to anaphase transition in oocyte and spermatocyte meiosis and mitosis in somatic and germ cells. Required for embryonic anterior-posterior axis formation. Negatively regulates ify-1 protein levels during meiosis I. Plays a role in regulating the abundance of glr-1 receptors in postmitotic neurons, which may in turn control animal locomotion. Involved in regulating GABA neurotransmitter release at neuromuscular junctions in GABA motor neurons. This is Abnormal embryogenesis protein 30 from Caenorhabditis elegans.